We begin with the raw amino-acid sequence, 273 residues long: 4-hydroxybenzoate octaprenyltransferase (273 aa).

Helical transmembrane passes span 7–27 (IGIY…SEGF), 30–50 (LKLL…GCVI), 83–103 (FFVL…WLTI), 122–142 (WTYF…LMAF), 146–166 (LNEI…WTVI), 197–217 (LIIG…SNVF), 221–241 (ISYH…QYLI), and 253–273 (FLHN…SVGL).

This sequence belongs to the UbiA prenyltransferase family. Requires Mg(2+) as cofactor.

It is found in the cell inner membrane. It catalyses the reaction all-trans-octaprenyl diphosphate + 4-hydroxybenzoate = 4-hydroxy-3-(all-trans-octaprenyl)benzoate + diphosphate. It participates in cofactor biosynthesis; ubiquinone biosynthesis. In terms of biological role, catalyzes the prenylation of para-hydroxybenzoate (PHB) with an all-trans polyprenyl group. Mediates the second step in the final reaction sequence of ubiquinone-8 (UQ-8) biosynthesis, which is the condensation of the polyisoprenoid side chain with PHB, generating the first membrane-bound Q intermediate 3-octaprenyl-4-hydroxybenzoate. The polypeptide is 4-hydroxybenzoate octaprenyltransferase (Vesicomyosocius okutanii subsp. Calyptogena okutanii (strain HA)).